Here is a 501-residue protein sequence, read N- to C-terminus: Neuronal acetylcholine receptor subunit beta-2 (501 aa).

The signal sequence occupies residues Met-1–Gly-25. The Extracellular portion of the chain corresponds to Thr-26–Thr-238. N-linked (GlcNAc...) asparagine glycosylation is found at Asn-51 and Asn-168. A disulfide bridge connects residues Cys-155 and Cys-169. A helical membrane pass occupies residues Ile-239 to Pro-259. Over Ser-260–Thr-267 the chain is Cytoplasmic. A helical membrane pass occupies residues Leu-268–Pro-288. The Extracellular portion of the chain corresponds to Pro-289–Tyr-300. Residues Leu-301–Val-321 form a helical membrane-spanning segment. Residues His-322–Arg-459 lie on the Cytoplasmic side of the membrane. Residues Leu-460–Pro-480 form a helical membrane-spanning segment.

The protein belongs to the ligand-gated ion channel (TC 1.A.9) family. Acetylcholine receptor (TC 1.A.9.1) subfamily. Beta-2/CHRNB2 sub-subfamily. In terms of assembly, neuronal AChR is a heteropentamer composed of two different types of subunits: alpha and beta. CHRNB2/Beta-2 subunit can be combined to CHRNA2/alpha-2, CHRNA3/alpha-3 or CHRNA4/alpha-4, CHRNA5/alpha-5, CHRNA6/alpha-6 and CHRNB3/beta-3 to give rise to functional receptors. CHRNA2:CHRNB2 and CHRNA4:CHRNB2 nAChR complexes exist in two subtypes: LS (low agonist sensitivity) with a (CHRNA2/4)3:(CHRNB2)2 and HS (high agonist sensitivity) with a (CHRNA2/4)2:(CHRNB2)3 stoichiometry; the subtypes differ in their subunit binding interfaces which are involved in ligand binding. Cells produce predominantly an (CHRNA4)3:(CHRNB2)2 nAChR. The stoichiometric form (CHRNA4)2:(CHRNB2)3 expression is selectively up-regulated by nicotine and has lower single channel conductance and calcium permeability. Also part of the stoichiometric forms: (CHRNA4:CHRNB2)2:CHRNB3 or (CHRNA6:CHRNB2)2:CHRNB3. Can form heteropentamers with CHRNA7, mainly found in basal forebrain cholinergic neurons. Interacts with RIC3; which is required for proper folding and assembly. Interacts with LYPD6.

The protein resides in the synaptic cell membrane. It localises to the cell membrane. The catalysed reaction is K(+)(in) = K(+)(out). It carries out the reaction Na(+)(in) = Na(+)(out). It catalyses the reaction Ca(2+)(in) = Ca(2+)(out). With respect to regulation, activated by a myriad of ligands such as acetylcholine, cytisine, nicotine, choline and epibatidine. Channel potentiation by calcium is stoichiometry-selective, CHRNA4:CHRNB2 nACh receptor is achieved by calcium association with topographically distinct sites framed by anionic residues within the CHRNA4 subunit and between the CHRNA4 and CHRNB2 subunits. Oligomeric amyloid-beta protein 42 activates specifially CHRNA7:CHRNB2 nAchRs. nAChR activity is inhibited by the antagonist alpha-conotoxins BuIA, PnIA, PnIC, GID and MII, small disulfide-constrained peptides from cone snails. Component of neuronal acetylcholine receptors (nAChRs) that function as pentameric, ligand-gated cation channels with high calcium permeability among other activities. nAChRs are excitatory neurotrasnmitter receptors formed by a collection of nAChR subunits known to mediate synaptic transmission in the nervous system and the neuromuscular junction. Each nAchR subunit confers differential attributes to channel properties, including activation, deactivation and desensitization kinetics, pH sensitivity, cation permeability, and binding to allosteric modulators. CHRNB2 forms heteropentameric neuronal acetylcholine receptors with CHRNA2, CHRNA3, CHRNA4 and CHRNA6, as well as CHRNA5 and CHRNB3 as accesory subunits. Found in two major stoichiometric forms,(CHRNA4)3:(CHRNB2)2 and (CHRNA4)2:(CHRNB2)3, the two stoichiometric forms differ in their unitary conductance, calcium permeability, ACh sensitivity and potentiation by divalent cation. Heteropentameric channels with CHRNA6 and CHRNA4 exhibit high sensitivity to ACh and nicotine and are predominantly expressed in only a few brain areas, including dopaminergic neurons, norepirephrine neurons and cells of the visual system. nAChrs containing CHRNA6 subunits mediate endogenous cholinergic modulation of dopamine and gamma-aminobutyric acid (GABA) release in response to nicotine at nerve terminals. Also forms functional nAChRs with other subunits such as CHRNA7:CHRNB2, mainly expressed in basal forebrain cholinergic neurons. This Mus musculus (Mouse) protein is Neuronal acetylcholine receptor subunit beta-2 (Chrnb2).